We begin with the raw amino-acid sequence, 413 residues long: Glutaminase (413 aa).

The segment at 23 to 307 is glutaminase; the sequence is GELADYIPEL…LSDDMGLHLM (285 aa). 7 residues coordinate substrate: Ser-65, Asn-114, Glu-160, Asn-167, Tyr-191, Tyr-243, and Val-261. Residues 316–413 enclose the STAS domain; that stretch reads AVRSITRDGD…SDGTICKERV (98 aa).

Belongs to the glutaminase family. As to quaternary structure, homotetramer.

It catalyses the reaction L-glutamine + H2O = L-glutamate + NH4(+). The sequence is that of Glutaminase (glsA) from Corynebacterium glutamicum (strain ATCC 13032 / DSM 20300 / JCM 1318 / BCRC 11384 / CCUG 27702 / LMG 3730 / NBRC 12168 / NCIMB 10025 / NRRL B-2784 / 534).